The sequence spans 439 residues: O-fucosyltransferase 13 (439 aa).

A helical; Signal-anchor for type II membrane protein transmembrane segment spans residues 8-28; the sequence is PLFVFVLTFSLLLVVILLSPS. 2 N-linked (GlcNAc...) asparagine glycosylation sites follow: asparagine 104 and asparagine 119. Position 238 to 240 (238 to 240) interacts with substrate; sequence HLR. Asparagine 293 is a glycosylation site (N-linked (GlcNAc...) asparagine).

It belongs to the glycosyltransferase GT106 family.

The protein resides in the membrane. The protein operates within glycan metabolism. This is O-fucosyltransferase 13 from Arabidopsis thaliana (Mouse-ear cress).